The following is a 642-amino-acid chain: Threonine--tRNA ligase (642 aa).

A TGS domain is found at Met-1–Asp-61. Residues Asp-243–Pro-534 are catalytic. The Zn(2+) site is built by Cys-334, His-385, and His-511.

It belongs to the class-II aminoacyl-tRNA synthetase family. In terms of assembly, homodimer. The cofactor is Zn(2+).

The protein resides in the cytoplasm. It carries out the reaction tRNA(Thr) + L-threonine + ATP = L-threonyl-tRNA(Thr) + AMP + diphosphate + H(+). Catalyzes the attachment of threonine to tRNA(Thr) in a two-step reaction: L-threonine is first activated by ATP to form Thr-AMP and then transferred to the acceptor end of tRNA(Thr). Also edits incorrectly charged L-seryl-tRNA(Thr). The chain is Threonine--tRNA ligase from Buchnera aphidicola subsp. Acyrthosiphon pisum (strain APS) (Acyrthosiphon pisum symbiotic bacterium).